The following is a 207-amino-acid chain: Oligoribonuclease (207 aa).

The Exonuclease domain occupies 20–183; it reads LVWLDMEMTG…ADIHESIDEL (164 aa). Residue Tyr-141 is part of the active site.

It belongs to the oligoribonuclease family.

The protein localises to the cytoplasm. 3'-to-5' exoribonuclease specific for small oligoribonucleotides. This chain is Oligoribonuclease, found in Paraburkholderia xenovorans (strain LB400).